The following is a 325-amino-acid chain: Geranylgeranyl transferase type-2 subunit beta (325 aa).

PFTB repeat units follow at residues Lys9–Asp50, Lys57–Asp99, Lys109–Gly150, Val157–Asn198, Leu208–Gly249, and Tyr256–Gly298. Residues His183–Ala185 and Arg228–Trp240 each bind geranylgeranyl diphosphate. Zn(2+) is bound by residues Asp234, Cys236, and His286.

Belongs to the protein prenyltransferase subunit beta family. Heterodimer of an alpha and a beta subunit. Zn(2+) is required as a cofactor.

It catalyses the reaction geranylgeranyl diphosphate + L-cysteinyl-[protein] = S-geranylgeranyl-L-cysteinyl-[protein] + diphosphate. Functionally, catalyzes the transfer of a geranyl-geranyl moiety from geranyl-geranyl pyrophosphate to proteins having the C-terminal -XCC or -XCXC, where both cysteines may become modified. Acts on YPT1 and SEC4. The sequence is that of Geranylgeranyl transferase type-2 subunit beta (BET2) from Saccharomyces cerevisiae (strain ATCC 204508 / S288c) (Baker's yeast).